A 49-amino-acid polypeptide reads, in one-letter code: MAVKKAALACSVCGSRNYSITANSNRTKRLELNKFCKHCGKKTLHKETR.

This sequence belongs to the bacterial ribosomal protein bL33 family.

This Lactobacillus delbrueckii subsp. bulgaricus (strain ATCC BAA-365 / Lb-18) protein is Large ribosomal subunit protein bL33B.